Consider the following 130-residue polypeptide: Large ribosomal subunit protein eL22 (130 aa).

The segment at 1-21 (MPGKTAQKGGRPSGKGKKKKQ) is disordered. The Nuclear localization signal motif lies at 17-20 (KKKK).

It belongs to the eukaryotic ribosomal protein eL22 family.

The polypeptide is Large ribosomal subunit protein eL22 (RPL22) (Tripneustes gratilla (Hawaian sea urchin)).